The following is a 320-amino-acid chain: Cytochrome f (320 aa).

The signal sequence occupies residues 1–35 (MQTINTFSWINQRITRSISVLLLVYIITRTSISSA). Residues Tyr36, Cys56, Cys59, and His60 each coordinate heme. A helical membrane pass occupies residues 286 to 306 (VQGLLFFLASVILAQIFLVLK).

Belongs to the cytochrome f family. In terms of assembly, the 4 large subunits of the cytochrome b6-f complex are cytochrome b6, subunit IV (17 kDa polypeptide, petD), cytochrome f and the Rieske protein, while the 4 small subunits are PetG, PetL, PetM and PetN. The complex functions as a dimer. It depends on heme as a cofactor.

Its subcellular location is the plastid thylakoid membrane. Its function is as follows. Component of the cytochrome b6-f complex, which mediates electron transfer between photosystem II (PSII) and photosystem I (PSI), cyclic electron flow around PSI, and state transitions. This chain is Cytochrome f, found in Cuscuta exaltata (Tall dodder).